Consider the following 540-residue polypeptide: Receptor-interacting serine/threonine-protein kinase 2 (540 aa).

Residues 18-294 enclose the Protein kinase domain; sequence LADLRYLSRG…KCLIELEPVL (277 aa). Residues 24–32 and lysine 47 contribute to the ATP site; that span reads LSRGASGTV. The tract at residues 65–73 is helix alphaC; that stretch reads REAEILHKA. Aspartate 146 acts as the Proton acceptor in catalysis. The interval 167–193 is activation segment (AS); it reads LSKWRMMSLSQSRSSKSAPEGGTIVYM. At serine 168 the chain carries Phosphoserine. Serine 174 carries the post-translational modification Phosphoserine; alternate. Serine 176 is modified (phosphoserine; by autocatalysis). The residue at position 178 (serine 178) is a Phosphoserine; alternate. Residue serine 180 is modified to Phosphoserine. Serine 181 carries the post-translational modification Phosphoserine; alternate. Lysine 209 is covalently cross-linked (Glycyl lysine isopeptide (Lys-Gly) (interchain with G-Cter in ubiquitin)). A disordered region spans residues 318–367; the sequence is SRTVHLSDKKKRELSPNIPVNSGPREESCGSSQLHKTSGSPGTSRSLSAP. The span at 322-331 shows a compositional bias: basic and acidic residues; sequence HLSDKKKREL. The segment covering 346 to 366 has biased composition (polar residues); the sequence is CGSSQLHKTSGSPGTSRSLSA. Residues serine 363 and serine 391 each carry the phosphoserine modification. The region spanning 432–524 is the CARD domain; sequence GIAQQWIQSK…LQPYPEILVL (93 aa). Phosphotyrosine; by autocatalysis is present on tyrosine 472. 3 positions are modified to phosphoserine: serine 525, serine 527, and serine 529. Residue lysine 536 forms a Glycyl lysine isopeptide (Lys-Gly) (interchain with G-Cter in ubiquitin) linkage. The residue at position 537 (serine 537) is a Phosphoserine.

Belongs to the protein kinase superfamily. TKL Ser/Thr protein kinase family. Interacts (via CARD domain) with NOD2 (via CARD domain). Interacts (via CARD domain) with NOD1 (via CARD domain). Homooligomer; following interaction with NOD1 or NOD2, homooligomerizes via its CARD domain and forms long filaments named RIPosomes. Found in a signaling complex consisting of at least ARHGEF2, NOD2 and RIPK2. Interacts with ARHGEF2; the interaction mediates tyrosine phosphorylation of RIPK2 by Src kinase CSK. Interacts with MAP3K4; this interaction sequesters RIPK2 from the NOD2 signaling pathway. Interacts with IKBKG/NEMO. The polyubiquitinated protein interacts with MAP3K7/TAK1; interaction is indirect and is mediated by TAB2 and TAB3 that bind to polyubiquitin chains attached to RIPK2. Binds to CFLAR/CLARP and CASP1 via their CARD domains. Binds to BIRC3/c-IAP1 and BIRC2/c-IAP2, TRAF1, TRAF2, TRAF5 and TRAF6. Interacts with NLRP10. Interacts with CARD9. Interacts with INAVA; the interaction takes place upon PRR stimulation. Interacts (via CARD domain) with NGFR (via death domain). Interacts with IRGM; promoting RIPK2 degradation. Post-translationally, polyubiquitinated via both 'Lys-63'- and 'Met-1'-linked polyubiquitin following recruitment by NOD1 or NOD2, creating docking sites for downstream effectors, triggering activation of the NF-kappa-B and MAP kinases signaling. 'Lys-63'-linked polyubiquitination by XIAP is essential for NOD2 signaling and promotes recruitment of the LUBAC complex. Also polyubiquitinated with 'Lys-63'-linked chains by PELI3, BIRC2/c-IAP1 and BIRC3/c-IAP2. Ubiquitinated on Lys-209 via 'Lys-63'-linked by ITCH. Undergoes 'Lys-63'-linked deubiquitination by MYSM1 to attenuate NOD2-mediated inflammation and tissue damage. Polyubiquitinated with 'Lys-63'-linked chains in response to Shigella infection, promoting its SQSTM1/p62-dependent autophagic degradation. Undergoes 'Met-1'-linked polyubiquitination; the head-to-tail linear polyubiquitination is mediated by the LUBAC complex in response to NOD2 stimulation 'Met-1'-linked polyubiquitination. 'Lys-63'-linked polyubiquitination by XIAP is required for recruimtent of the LUBAC complex and subsequent. Linear polyubiquitination is restricted by FAM105B/otulin, probably to limit NOD2-dependent pro-inflammatory signaling activation of NF-kappa-B. Autophosphorylated. Phosphorylated at Ser-176, either via autophosphorylation or by LRRK2, enhancing activity. Autophosphorylation at Tyr-472 is required for effective NOD2 signaling. Autophosphorylation is however not essential for NOD2 signaling. In terms of processing, degraded via selective autophagy following interaction with IRGM. IRGM promotes NOD1/NOD2-RIPK2 RIPosome recruitment to autophagosome membranes. RIPK2 biquitinated via 'Lys-63'-linked chains is then recognized by SQSTM1/p62, leading to the SQSTM1/p62-dependent autophagic degradation of the NOD1/NOD2-RIPK2 RIPosome.

The protein localises to the cytoplasm. The protein resides in the cell membrane. Its subcellular location is the endoplasmic reticulum. It carries out the reaction L-seryl-[protein] + ATP = O-phospho-L-seryl-[protein] + ADP + H(+). The enzyme catalyses L-threonyl-[protein] + ATP = O-phospho-L-threonyl-[protein] + ADP + H(+). The catalysed reaction is L-tyrosyl-[protein] + ATP = O-phospho-L-tyrosyl-[protein] + ADP + H(+). Its activity is regulated as follows. In the inactive state, the helix alphaC is packed against the helical, non-phosphorylated activation segment (AS). Upon activation, helix alphaC is displaced and the phosphorylated AS becomes disordered. Its function is as follows. Serine/threonine/tyrosine-protein kinase that plays an essential role in modulation of innate and adaptive immune responses. Acts as a key effector of NOD1 and NOD2 signaling pathways: upon activation by bacterial peptidoglycans, NOD1 and NOD2 oligomerize and recruit RIPK2 via CARD-CARD domains, leading to the formation of RIPK2 filaments. Once recruited, RIPK2 autophosphorylates and undergoes 'Lys-63'-linked polyubiquitination by E3 ubiquitin ligases XIAP, BIRC2 and BIRC3, as well as 'Met-1'-linked (linear) polyubiquitination by the LUBAC complex, becoming a scaffolding protein for downstream effectors. 'Met-1'-linked polyubiquitin chains attached to RIPK2 recruit IKBKG/NEMO, which undergoes 'Lys-63'-linked polyubiquitination in a RIPK2-dependent process. 'Lys-63'-linked polyubiquitin chains attached to RIPK2 serve as docking sites for TAB2 and TAB3 and mediate the recruitment of MAP3K7/TAK1 to IKBKG/NEMO, inducing subsequent activation of IKBKB/IKKB. In turn, NF-kappa-B is released from NF-kappa-B inhibitors and translocates into the nucleus where it activates the transcription of hundreds of genes involved in immune response, growth control, or protection against apoptosis. The protein kinase activity is dispensable for the NOD1 and NOD2 signaling pathways. Contributes to the tyrosine phosphorylation of the guanine exchange factor ARHGEF2 through Src tyrosine kinase leading to NF-kappa-B activation by NOD2. Also involved in adaptive immunity: plays a role during engagement of the T-cell receptor (TCR) in promoting BCL10 phosphorylation and subsequent NF-kappa-B activation. Plays a role in the inactivation of RHOA in response to NGFR signaling. This chain is Receptor-interacting serine/threonine-protein kinase 2 (RIPK2), found in Bos taurus (Bovine).